The primary structure comprises 833 residues: Serine/threonine-protein phosphatase 4 regulatory subunit 3A (833 aa).

Residues 1–100 (MTDTRRRVKV…DEIWEKICQV (100 aa)) enclose the WH1 domain. Phosphoserine occurs at positions 117 and 127. Residue Lys655 is modified to N6-acetyllysine. Residues 683–694 (FNTDEDDMEDGE) are compositionally biased toward acidic residues. Disordered stretches follow at residues 683 to 712 (FNTD…IMDP) and 733 to 833 (KTNL…KFDS). A phosphoserine mark is found at Ser698, Ser741, Ser768, Ser771, Ser774, Ser777, and Ser780. Positions 734–751 (TNLSGRQSPSFKLSLSSG) are enriched in polar residues. A compositionally biased stretch (low complexity) spans 752-768 (TKTNLTSQSSTTNLPGS). Over residues 785–794 (PKNTSQTAAI) the composition is skewed to polar residues. A compositionally biased stretch (acidic residues) spans 806-820 (YPDDDEDDDEDEDKE).

It belongs to the SMEK family. Serine/threonine-protein phosphatase 4 (PP4) occurs in different assemblies of the catalytic and one or more regulatory subunits. Component of the PP4 complex PPP4C-PPP4R2-PPP4R3A. Interacts with PPP4C; the interaction requires PPP4R2.

The protein localises to the cytoplasm. The protein resides in the cytoskeleton. Its subcellular location is the microtubule organizing center. It is found in the centrosome. It localises to the nucleus. Regulatory subunit of serine/threonine-protein phosphatase 4. May regulate the activity of PPP4C at centrosomal microtubule organizing centers. The PPP4C-PPP4R2-PPP4R3A PP4 complex specifically dephosphorylates H2AX phosphorylated on 'Ser-140' (gamma-H2AX) generated during DNA replication and required for DNA DSB repair. This is Serine/threonine-protein phosphatase 4 regulatory subunit 3A from Homo sapiens (Human).